Consider the following 328-residue polypeptide: Coiled-coil domain-containing protein 54 (328 aa).

The stretch at 93 to 148 forms a coiled coil; it reads KIQEKTDFFQKQMQVLETKMNVNENKQCATAEDIFSVKEDVDALKKKVTELGNQNS. The residue at position 182 (threonine 182) is a Phosphothreonine.

The protein is Coiled-coil domain-containing protein 54 (CCDC54) of Bos taurus (Bovine).